Consider the following 281-residue polypeptide: Clc-like protein 5 (281 aa).

The next 4 helical transmembrane spans lie at 13-33 (LATL…TITP), 104-124 (VLIL…AVIF), 137-157 (IMLD…LIVF), and 184-204 (YYLA…AALV).

The protein belongs to the Clc family.

Its subcellular location is the membrane. The sequence is that of Clc-like protein 5 (clc-5) from Caenorhabditis elegans.